Here is a 158-residue protein sequence, read N- to C-terminus: MTNGNGTPPEAAAPPQLNVLAQYTKDLSFENPNAPASLAPQQSQPAINIQINVGANNLAENEFEVTLSIEGKAESGSTVLFSFELAYAGVFRIVNVPQENLHPLIMIECPRLLFPFAREIIASAVRDGGFPPLMLDPVDFVGLYRQNLERAQQQGQPS.

It belongs to the SecB family. Homotetramer, a dimer of dimers. One homotetramer interacts with 1 SecA dimer.

The protein localises to the cytoplasm. Its function is as follows. One of the proteins required for the normal export of preproteins out of the cell cytoplasm. It is a molecular chaperone that binds to a subset of precursor proteins, maintaining them in a translocation-competent state. It also specifically binds to its receptor SecA. The protein is Protein-export protein SecB of Rhodopseudomonas palustris (strain HaA2).